Here is a 410-residue protein sequence, read N- to C-terminus: Peptidase T (410 aa).

Zn(2+) is bound at residue His77. The active site involves Asp79. Asp140 contacts Zn(2+). Glu174 serves as the catalytic Proton acceptor. Zn(2+) contacts are provided by Glu175, Asp197, and His379.

This sequence belongs to the peptidase M20B family. Requires Zn(2+) as cofactor.

Its subcellular location is the cytoplasm. The enzyme catalyses Release of the N-terminal residue from a tripeptide.. Its function is as follows. Cleaves the N-terminal amino acid of tripeptides. The chain is Peptidase T from Desulfitobacterium hafniense (strain DSM 10664 / DCB-2).